A 398-amino-acid chain; its full sequence is Acetate kinase (398 aa).

N7 serves as a coordination point for Mg(2+). K14 lines the ATP pocket. R91 serves as a coordination point for substrate. Residue D148 is the Proton donor/acceptor of the active site. Residues 208–212, 283–285, and 331–335 each bind ATP; these read HLGNG, DSR, and GIGEN. A Mg(2+)-binding site is contributed by E384.

Belongs to the acetokinase family. Homodimer. It depends on Mg(2+) as a cofactor. Mn(2+) is required as a cofactor.

The protein resides in the cytoplasm. The catalysed reaction is acetate + ATP = acetyl phosphate + ADP. It functions in the pathway metabolic intermediate biosynthesis; acetyl-CoA biosynthesis; acetyl-CoA from acetate: step 1/2. Its function is as follows. Catalyzes the formation of acetyl phosphate from acetate and ATP. Can also catalyze the reverse reaction. This chain is Acetate kinase, found in Halothermothrix orenii (strain H 168 / OCM 544 / DSM 9562).